Here is a 432-residue protein sequence, read N- to C-terminus: Adenylosuccinate synthetase (432 aa).

GTP is bound by residues 13-19 (GDEGKGK) and 41-43 (GHT). Asp14 acts as the Proton acceptor in catalysis. Mg(2+) is bound by residues Asp14 and Gly41. Residues 14–17 (DEGK), 39–42 (NAGH), Thr130, Arg144, Gln225, Thr240, and Arg304 each bind IMP. Catalysis depends on His42, which acts as the Proton donor. Residue 300-306 (AVTGRPR) participates in substrate binding. Residues Arg306, 332-334 (KLD), and 415-417 (STG) each bind GTP.

It belongs to the adenylosuccinate synthetase family. As to quaternary structure, homodimer. Mg(2+) serves as cofactor.

It is found in the cytoplasm. It carries out the reaction IMP + L-aspartate + GTP = N(6)-(1,2-dicarboxyethyl)-AMP + GDP + phosphate + 2 H(+). It participates in purine metabolism; AMP biosynthesis via de novo pathway; AMP from IMP: step 1/2. In terms of biological role, plays an important role in the de novo pathway of purine nucleotide biosynthesis. Catalyzes the first committed step in the biosynthesis of AMP from IMP. This Haemophilus influenzae (strain PittGG) protein is Adenylosuccinate synthetase.